The chain runs to 317 residues: Melanocyte-stimulating hormone receptor (317 aa).

Residues 1-37 (MPMQGAQRRLLGSLNSTPTATPNLGLAANHTGAPCLE) are Extracellular-facing. N-linked (GlcNAc...) asparagine glycosylation is present at Asn29. The chain crosses the membrane as a helical span at residues 38–63 (VSIPDGLFLSLGLVSLVENVLVVAAI). Residues 64–72 (AKNRNLHSP) lie on the Cytoplasmic side of the membrane. Residues 73-93 (MYCFICCLALSDLLVSGSNML) traverse the membrane as a helical segment. Topologically, residues 94-118 (ETAVILLLEAGALATRASVVQQLQN) are extracellular. The chain crosses the membrane as a helical span at residues 119–140 (TIDVLTCSSMLCSLCFLGAIAV). Over 141 to 163 (DRYVSIFYALRYHSIVTLPRARR) the chain is Cytoplasmic. Residues 164–183 (AIAAIWVASVLSSTLFIAYC) traverse the membrane as a helical segment. At 184-191 (DHAAVLLC) the chain is on the extracellular side. Residues 192 to 211 (LVVFFLAMLVLMAVLYVHML) traverse the membrane as a helical segment. Over 212-240 (ARACQHAQGITRLHKRQLPAHQGFGLRGA) the chain is Cytoplasmic. A helical membrane pass occupies residues 241–266 (ATLTILLGIFFLCWGPFFLHLMLVVL). The Extracellular portion of the chain corresponds to 267–279 (CPQHLTCSCIFKN). A helical transmembrane segment spans residues 280–300 (FKVFLTLIICNTIIDPLIYAF). At 301–317 (RSQELCRTLKEVLLCSW) the chain is on the cytoplasmic side. Cys315 carries the S-palmitoyl cysteine lipid modification.

It belongs to the G-protein coupled receptor 1 family. In terms of assembly, interacts with MGRN1, but does not undergo MGRN1-mediated ubiquitination; this interaction competes with GNAS-binding and thus inhibits agonist-induced cAMP production. Interacts with OPN3; the interaction results in a decrease in MC1R-mediated cAMP signaling and ultimately a decrease in melanin production in melanocytes.

The protein resides in the cell membrane. Its function is as follows. Receptor for MSH (alpha, beta and gamma) and ACTH. The activity of this receptor is mediated by G proteins which activate adenylate cyclase. Mediates melanogenesis, the production of eumelanin (black/brown) and phaeomelanin (red/yellow), via regulation of cAMP signaling in melanocytes. This is Melanocyte-stimulating hormone receptor (MC1R) from Alouatta palliata (Mantled howler monkey).